A 162-amino-acid chain; its full sequence is Photosystem II extrinsic protein V (162 aa).

An N-terminal signal peptide occupies residues 1–25 (MFKKFSALFTLLFTLCLVNPMLVYS). Positions 62, 65, 66, and 117 each coordinate heme c.

It belongs to the cytochrome c family. PsbV subfamily. As to quaternary structure, PSII is composed of 1 copy each of membrane proteins PsbA, PsbB, PsbC, PsbD, PsbE, PsbF, PsbH, PsbI, PsbJ, PsbK, PsbL, PsbM, PsbT, PsbX, PsbY, PsbZ, Psb30/Ycf12, at least 3 peripheral proteins of the oxygen-evolving complex and a large number of cofactors. It forms dimeric complexes. It depends on heme c as a cofactor.

The protein localises to the plastid. The protein resides in the chloroplast thylakoid membrane. In terms of biological role, one of the extrinsic, lumenal subunits of photosystem II (PSII). PSII is a light-driven water plastoquinone oxidoreductase, using light energy to abstract electrons from H(2)O, generating a proton gradient subsequently used for ATP formation. The extrinsic proteins stabilize the structure of photosystem II oxygen-evolving complex (OEC), the ion environment of oxygen evolution and protect the OEC against heat-induced inactivation. This chain is Photosystem II extrinsic protein V, found in Guillardia theta (Cryptophyte).